Reading from the N-terminus, the 133-residue chain is Snaclec botrocetin subunit alpha (133 aa).

Disulfide bonds link cysteine 2–cysteine 13, cysteine 30–cysteine 128, and cysteine 103–cysteine 120. The region spanning 9 to 129 (YEGNCYKFFQ…CAQKNPFVCK (121 aa)) is the C-type lectin domain.

The protein belongs to the snaclec family. Heterodimer of subunits alpha and beta; disulfide-linked. Botrocetin and vWF form a soluble complex. As to expression, expressed by the venom gland.

It is found in the secreted. Its function is as follows. Snaclec that binds to von Willebrand factor (VWF) and induces its interaction with GPIbalpha (GP1BA) (via the vWF A1 domain), resulting in platelet aggregation. The sequence is that of Snaclec botrocetin subunit alpha from Bothrops jararaca (Jararaca).